Here is a 761-residue protein sequence, read N- to C-terminus: RNA-binding protein mde7 (761 aa).

Composition is skewed to polar residues over residues 31 to 46, 58 to 83, and 99 to 110; these read PNHSSLSEQQSTNSLL, SRNSTTNPLNLLYTQTQQPARSTTPF, and SRNNSYLQGTAE. Disordered regions lie at residues 31-110 and 188-213; these read PNHS…GTAE and HYFDDTDKSVHSKSSSGSNSLSEASN. Residues 188-197 are compositionally biased toward basic and acidic residues; sequence HYFDDTDKSV. Low complexity predominate over residues 199 to 211; sequence SKSSSGSNSLSEA. The RRM 1 domain occupies 223–289; the sequence is IVGGLPDDFD…SSTNNFTIIQ (67 aa). Over residues 442-466 the composition is skewed to polar residues; that stretch reads ESNSLSNQPNNFAQTSFDYQPNHPN. Residues 442-468 form a disordered region; it reads ESNSLSNQPNNFAQTSFDYQPNHPNAI. The RRM 2 domain maps to 602–679; that stretch reads NTIYVGNLSN…GGIRLSYSKN (78 aa).

In Schizosaccharomyces pombe (strain 972 / ATCC 24843) (Fission yeast), this protein is RNA-binding protein mde7 (mde7).